Here is a 56-residue protein sequence, read N- to C-terminus: Putative 2-Cys peroxiredoxin BAS1 (56 aa).

The protein belongs to the peroxiredoxin family. AhpC/Prx1 subfamily. As to quaternary structure, homodimer; disulfide-linked, upon oxidation.

The protein resides in the plastid. It localises to the chloroplast. It catalyses the reaction a hydroperoxide + [thioredoxin]-dithiol = an alcohol + [thioredoxin]-disulfide + H2O. Functionally, thiol-specific peroxidase that catalyzes the reduction of hydrogen peroxide and organic hydroperoxides to water and alcohols, respectively. Plays a role in cell protection against oxidative stress by detoxifying peroxides. May be an antioxidant enzyme particularly in the developing shoot and photosynthesizing leaf. This is Putative 2-Cys peroxiredoxin BAS1 from Pinus strobus (Eastern white pine).